The primary structure comprises 496 residues: Iroquois-class homeodomain protein irx-4 (496 aa).

Positions 141–203 (GSTRRKNATR…NARRRLKKEN (63 aa)) form a DNA-binding region, homeobox; TALE-type. The tract at residues 203–236 (NKMTWPPRNKCSDEKRPYDEEEEEEEEEDSQKAT) is disordered. The segment covering 221 to 231 (DEEEEEEEEED) has biased composition (acidic residues).

It belongs to the TALE/IRO homeobox family. Expressed in the neural plate in overlapping patterns with other irx members, which all share an anterior border of expression. Broadly expressed in the tailbud rhombencephalon (hindbrain). Outside the nervous system and at tailbud stages, expressed in the developing otic vesicle, branchial arches and prospective heart region.

It is found in the nucleus. Acts partially redundantly with other irx members in neural patterning. Required for formation of the posterior forebrain, midbrain, hindbrain, and to a lesser extent, spinal cord. Patterns the neuroectoderm in both the anterior/posterior and dorsal/ventral axes. Does not appear to play a role in pronephros kidney development. This Xenopus tropicalis (Western clawed frog) protein is Iroquois-class homeodomain protein irx-4.